An 807-amino-acid polypeptide reads, in one-letter code: Glycerol-3-phosphate acyltransferase (807 aa).

The short motif at 308–313 (CHRSHM) is the HXXXXD motif element.

This sequence belongs to the GPAT/DAPAT family.

Its subcellular location is the cell inner membrane. It carries out the reaction sn-glycerol 3-phosphate + an acyl-CoA = a 1-acyl-sn-glycero-3-phosphate + CoA. It participates in phospholipid metabolism; CDP-diacylglycerol biosynthesis; CDP-diacylglycerol from sn-glycerol 3-phosphate: step 1/3. The sequence is that of Glycerol-3-phosphate acyltransferase from Shewanella loihica (strain ATCC BAA-1088 / PV-4).